The following is a 75-amino-acid chain: Rugosin-LK2 (75 aa).

The signal sequence occupies residues 1–24 (MFTMKKSLLFLFFLGTISLSFCEG). Positions 25 to 40 (ERSADEDDEGEMTEEE) are excised as a propeptide.

As to expression, expressed by the skin glands.

The protein resides in the secreted. Functionally, has antimicrobial activity against Gram-positive bacteria S.aureus ATCC 2592 (MIC=10.0 uM), S.aureus ATCC 43300 (MIC=10.0 uM) and B.subtilis (MIC=30.0 uM), against Gram-negative bacteria E.coli ML-35P (MIC=10.0 uM), P.aeruginosa PA01 (MIC=2.5 uM) and P.aeruginosa ATCC 27853 (MIC=2.5 uM) and against fungus C.albicans ATCC 2002 (MIC=10.0 uM). The chain is Rugosin-LK2 from Limnonectes kuhlii (Kuhl's Creek frog).